Reading from the N-terminus, the 1203-residue chain is MHVKSIIIDGFKSYAQRTEINGFDPLFNAITGLNGSGKSNILDSICFLLGISNLTQVRASNLQDLVYKNGQAGITKATVSITFDNYDKKQSPLGFEAHDEITVTRQVVIGGRNKYLINGVNANNTRVQDLFCSVGLNVNNPHFLIMQGRITKVLNMKPPEILAMIEEAAGTRMYECKKIAAQKTIEKKEAKLKEIQTILEEEITPTIHKLKEERSSYLEYQKIMREIEHLSRLYVAYQFVCAEETKVRSAEELKEMQDSILKLQDTMAENERKVKELGKEIAELEKMRDQEVGGALRSLEEALSEAQRADTKVQSALDLKKQNMKAEREKKRKELVKSMEEDAKVLTAKEKEVKKITDGLSSLQEASQKDVEAFTSAQQHFNAVSAGLSSNEDGEEATLAGQMMACKNETSKAETEAKQAQMKLKHAQQELKTKQAEVKKMDGGYKKDNEAFEAVKKSKEKLEVEMKKLNYEDGREEQLLEKRRGLSRDVNRLREAYESLMARFPNLQFEYKDPEKNWDSDRVKGLVASLISIKDVSTATALEVVAGGRLYNVVVDTEVTGKKLLEKGELKRRFTIIPLNKISARCLGKDTVNVAKNLVGADNVNLALSLVGYESELQKAMEYVFGTTLVCDTMDNAKKVTFDKRIMTKTVTLGGDTFDPQGTLSGGARSQNASVLVRLQELKDVQDELKAKETELQEVEKELMTLKNTVERYRQLKQQWEMKSEEAELLQTKLQQSSYHKQQEELDSLKQTIEESEETLKNTKEVQKKAEEKFKVLEHKMKNAEAERERELKEAQQKLDTAKKKADASNKKMKEKQQEVDALVLELEELKREQTTYKQQIETVDEAMKAYQEQADSMASEVSKNKEAVKKAQDELAKQKEIIMGHDKEIKTKSSEAGKLRENNNDLQLKIKELEHNISKHKKDSADAAAKVAKMLNDYEWIASEKHLFGQANTAYDFKTNNPKEAGQRLHKLQEKKEKLGRNVNMRAMNMLTQAEERYNDLMKRKRIVENDKSKILTTIEELDQKKNEALNIAWQKVNKDFGSIFSTLLPGANAMLAPPEGQSVLDGLEFKVALGNTWKENLTELSGGQRSLVALSLILAMLLFKPAPIYILDEVDAALDLSHTQNIGQMLRTHFRHSQFIVVSLKDGMFNNANVLFKTKFVDGVSTVARFAQNQNGGSSAGQQRSDKSKTKERRNRMEVDK.

32-39 is a binding site for ATP; sequence GLNGSGKS. Positions 172 to 513 form a coiled coil; that stretch reads RMYECKKIAA…FPNLQFEYKD (342 aa). An SMC hinge domain is found at 522–640; sequence RVKGLVASLI…CDTMDNAKKV (119 aa). A coiled-coil region spans residues 670–1032; sequence SQNASVLVRL…LDQKKNEALN (363 aa). The segment covering 1174–1185 has biased composition (low complexity); it reads QNQNGGSSAGQQ. Residues 1174–1203 are disordered; sequence QNQNGGSSAGQQRSDKSKTKERRNRMEVDK. Residues 1186 to 1203 show a composition bias toward basic and acidic residues; the sequence is RSDKSKTKERRNRMEVDK.

Belongs to the SMC family. SMC2 subfamily. As to quaternary structure, forms a heterodimer with XCAP-C/SMC4. Component of the condensin complex, which contains the XCAP-E/SMC2 and XCAP-C/SMC4 heterodimer, and three non SMC subunits that probably regulate the complex: XCAP-H/BRRN1, XCAP-D2/CNAP1 and XCAP-G/CAPG.

Its subcellular location is the nucleus. The protein localises to the cytoplasm. It is found in the chromosome. Central component of the condensin complex, a complex required for conversion of interphase chromatin into mitotic-like condense chromosomes. The condensin complex probably introduces positive supercoils into relaxed DNA in the presence of type I topoisomerases and converts nicked DNA into positive knotted forms in the presence of type II topoisomerases. This is Structural maintenance of chromosomes protein 2 (smc2) from Xenopus laevis (African clawed frog).